The following is a 184-amino-acid chain: uncharacterized protein (184 aa).

The signal sequence occupies residues 1–20 (MKKQILALVCGVIFSSSTWA).

The protein to E.coli YtfJ.

The protein resides in the periplasm. This is an uncharacterized protein from Haemophilus influenzae (strain ATCC 51907 / DSM 11121 / KW20 / Rd).